The chain runs to 439 residues: MIKATDRKLVVGLEIGTAKVAALVGEVLPDGMVNIIGVGSCPSRGMDKGGVNDLESVVKCVQRAIDQAELMADCQISSVYLALSGKHISCQNEIGMVPISEEEVTQEDVENVVHTAKSVRVRDEHRVLHVIPQEYAIDYQEGIKNPVGLSGVRMQAKVHLITCHNDMAKNIVKAVERCGLKVDQLIFAGLASSYSVLTEDERELGVCVVDIGGGTMDIAVYTGGALRHTKVIPYAGNVVTSDIAYAFGTPPSDAEAIKVRHGCALGSIVGKDESVEVPSVGGRPPRSLQRQTLAEVIEPRYTELLNLVNEEILQLQEKLRQQGVKHHLAAGIVLTGGAAQIEGLAACAQRVFHTQVRIGAPLNITGLTDYAQEPYYSTAVGLLHYGKESHLNGEAEVEKRVTASVGSWIKRLNSWLRKEFDANGLINGDRPIRBCEECA.

It belongs to the FtsA/MreB family. In terms of assembly, self-interacts. Interacts with FtsZ.

The protein localises to the cell inner membrane. Its function is as follows. Cell division protein that is involved in the assembly of the Z ring. May serve as a membrane anchor for the Z ring. This is Cell division protein FtsA from Shigella flexneri.